We begin with the raw amino-acid sequence, 83 residues long: Neurotoxin 3FTx-RI (83 aa).

An N-terminal signal peptide occupies residues 1–21; that stretch reads MKTLLLTLVVLTIVCLDLGHT. 4 cysteine pairs are disulfide-bonded: Cys-24-Cys-45, Cys-38-Cys-62, Cys-64-Cys-75, and Cys-76-Cys-81.

The protein belongs to the three-finger toxin family. Short-chain subfamily. Type I alpha-neurotoxin sub-subfamily. In terms of tissue distribution, expressed by the venom gland.

The protein localises to the secreted. Functionally, binds to muscle nicotinic acetylcholine receptor (nAChR) and inhibit acetylcholine from binding to the receptor, thereby impairing neuromuscular transmission. This is Neurotoxin 3FTx-RI from Bungarus fasciatus (Banded krait).